A 121-amino-acid chain; its full sequence is Protein yippee (121 aa).

Residues 13–110 (KLFNCAQCHT…LEYALITEAE (98 aa)) enclose the Yippee domain. Residues Cys17, Cys20, Cys73, and Cys76 each contribute to the Zn(2+) site.

Belongs to the yippee family. In terms of assembly, interacts with hemolin.

The protein is Protein yippee of Drosophila melanogaster (Fruit fly).